A 267-amino-acid polypeptide reads, in one-letter code: 4,5-DOPA dioxygenase extradiol (267 aa).

Positions 9, 47, 168, and 222 each coordinate Zn(2+).

This sequence belongs to the DODA-type extradiol aromatic ring-opening dioxygenase family. It depends on Zn(2+) as a cofactor. Fe(2+) is required as a cofactor. Expressed in petals. Not detected in leaves, stems and roots.

It localises to the cytoplasm. The enzyme catalyses L-dopa + O2 = 4-(L-alanin-3-yl)-2-hydroxy-cis,cis-muconate 6-semialdehyde + H(+). Its pathway is pigment biosynthesis; betalain biosynthesis. In terms of biological role, opens the cyclic ring of dihydroxy-phenylalanine (DOPA) between carbons 4 and 5, thus producing an unstable seco-DOPA that rearranges nonenzymatically to betalamic acid. Produces mainly (S)-betalamic acid. Required for the coloration of flowers. This is 4,5-DOPA dioxygenase extradiol (DOD) from Mirabilis jalapa (Garden four-o'clock).